Here is a 1306-residue protein sequence, read N- to C-terminus: Putative late blight resistance protein homolog R1A-10 (1306 aa).

Coiled-coil stretches lie at residues 407 to 428 (SDSL…ESLQ) and 520 to 542 (PRMK…KLLS). One can recognise an NB-ARC domain in the interval 521–808 (RMKEEIVGFE…SEAFIKSSEG (288 aa)). An ATP-binding site is contributed by 554-561 (GMPGLGKT). 11 LRR repeats span residues 858–881 (AEEN…VYSH), 921–935 (LSSL…ILPN), 936–961 (FKFL…PYLR), 979–1007 (LWNL…VWDM), 1010–1035 (LRHL…NLDD), 1057–1081 (TPNL…ALNF), 1082–1106 (PIRL…ISAP), 1110–1129 (YLKL…TADH), 1130–1153 (LKNL…KVSN), 1156–1181 (FPQL…AFPN), and 1216–1240 (ESVV…NFKL). In terms of domain architecture, HMA spans 1240–1306 (LVLIEKWPKF…KLRKCGMPGL (67 aa)).

It belongs to the disease resistance NB-LRR family.

The protein resides in the cytoplasm. It localises to the membrane. Confers resistance to late blight (Phytophthora infestans) races carrying the avirulence gene Avr1. Resistance proteins guard the plant against pathogens that contain an appropriate avirulence protein via an indirect interaction with this avirulence protein. That triggers a defense system including the hypersensitive response, which restricts the pathogen growth. This Solanum demissum (Wild potato) protein is Putative late blight resistance protein homolog R1A-10 (R1A-10).